A 461-amino-acid chain; its full sequence is V-type ATP synthase beta chain (461 aa).

The protein belongs to the ATPase alpha/beta chains family.

Functionally, produces ATP from ADP in the presence of a proton gradient across the membrane. The V-type beta chain is a regulatory subunit. In Clostridium botulinum (strain 657 / Type Ba4), this protein is V-type ATP synthase beta chain.